The following is a 35-amino-acid chain: Natriuretic peptide TNPa (35 aa).

A disulfide bridge links C9 with C25.

In terms of tissue distribution, expressed by the venom gland.

Its subcellular location is the secreted. Functionally, snake venom natriuretic peptide that exhibits vasoactive and probable hypotensive activity. Is only weakly active on natriuretic peptide receptor-C (NPR3). Stimulates cGMP production through the natriuretic peptide receptor 1 (NPR1) with moderate potencies for the rat NPR1 (EC(50)=2020 nM), and very weak potencies over human NPR1 (15% activation at 10 uM). In vivo, does not impact systolic and diastolic blood pressure, as well as heart rate, when intravenously injected in conscious rabbits. Does not affect the bradycardia due to cardiac afferent stimulation (Bezold-Jarisch reflex). In Oxyuranus microlepidotus (Inland taipan), this protein is Natriuretic peptide TNPa.